A 179-amino-acid chain; its full sequence is Large ribosomal subunit protein uL6c (179 aa).

The protein belongs to the universal ribosomal protein uL6 family. As to quaternary structure, part of the 50S ribosomal subunit.

It is found in the plastid. The protein localises to the cyanelle. Its function is as follows. Binds 23S rRNA. In Cyanophora paradoxa, this protein is Large ribosomal subunit protein uL6c (rpl6).